Consider the following 343-residue polypeptide: MGETVTIQKNWQELIRPNKLQVTPGSDATRFATVVAEPLERGFGQTLGNALRRILLSSLQGAAVQSVHIDGVLHEFSSIAGVREDVTDIVLNIKDISIKMQGEGPKRMVVKKQGPGAVTAGDIQTVGDIVVLNPDLQLCTLDEGAEIRMEFTVATGKGYVPAERNRPEDAPIGLIPIDSLFSPVRKVSYKVENTREGQILDYDKLTMTIETNGAISPEDAVAYAARILQDQLNVFVNFEEPRKEVAQEIIPDLAFNPAFLKKVDELELSVRSANCLKNDNIVYIGDLVQKSEAEMLRTPNFGRKSLNEIKEVLAQMGLHLGMEVPGWPPENIDELAKRFEDHY.

The segment at 1-239 (MGETVTIQKN…DQLNVFVNFE (239 aa)) is alpha N-terminal domain (alpha-NTD). The tract at residues 255-343 (FNPAFLKKVD…ELAKRFEDHY (89 aa)) is alpha C-terminal domain (alpha-CTD).

The protein belongs to the RNA polymerase alpha chain family. Homodimer. The RNAP catalytic core consists of 2 alpha, 1 beta, 1 beta' and 1 omega subunit. When a sigma factor is associated with the core the holoenzyme is formed, which can initiate transcription.

The enzyme catalyses RNA(n) + a ribonucleoside 5'-triphosphate = RNA(n+1) + diphosphate. In terms of biological role, DNA-dependent RNA polymerase catalyzes the transcription of DNA into RNA using the four ribonucleoside triphosphates as substrates. This is DNA-directed RNA polymerase subunit alpha from Bradyrhizobium sp. (strain BTAi1 / ATCC BAA-1182).